A 418-amino-acid polypeptide reads, in one-letter code: MDKFKIDGRCTLNGEVTISGAKNAALPILFATLLCDEEIHLSNVPRLKDVGTTLKLLEMLGATTKVNGNVTVLTGAVNNHVAPYELVKTMRASILALGPLAARFGAADVSLPGGCAIGARPVNLHVHGLELMGAKIAIEDGYIKARVDGRLKGAHILMDMVSVTGTENLMMAATLADGRTVIENAAREPEVVDLANFLNALGAKVQGAGTDTLTIDGVERLHGGSYSVQPDRIETGTFLVGAAVTGGKVTCRKTDPSLLEAVLVKLEEAGALIEKGADWITLDMTGRTLKPVTIKTAPYPAFPTDMQAQFTVLNAVAKGTGMVTETIFENRFMHVPELVRMGADIELQGNVAICRDTEQLKGAQVMATDLRASASLVLAGFVAEGSTIVDRIYHIDRGYEDIEHKLQGLGGCIERIKG.

22-23 contributes to the phosphoenolpyruvate binding site; that stretch reads KN. A UDP-N-acetyl-alpha-D-glucosamine-binding site is contributed by Arg91. Cys115 functions as the Proton donor in the catalytic mechanism. At Cys115 the chain carries 2-(S-cysteinyl)pyruvic acid O-phosphothioketal. UDP-N-acetyl-alpha-D-glucosamine contacts are provided by Asp305 and Ile327.

This sequence belongs to the EPSP synthase family. MurA subfamily.

The protein resides in the cytoplasm. The catalysed reaction is phosphoenolpyruvate + UDP-N-acetyl-alpha-D-glucosamine = UDP-N-acetyl-3-O-(1-carboxyvinyl)-alpha-D-glucosamine + phosphate. Its pathway is cell wall biogenesis; peptidoglycan biosynthesis. Cell wall formation. Adds enolpyruvyl to UDP-N-acetylglucosamine. This Aeromonas salmonicida (strain A449) protein is UDP-N-acetylglucosamine 1-carboxyvinyltransferase.